A 261-amino-acid polypeptide reads, in one-letter code: uncharacterized protein (261 aa).

Transmembrane regions (helical) follow at residues 31–51, 71–91, 101–121, 130–150, 167–187, and 213–233; these read TFLS…TGIV, TNVM…SWLL, LAYI…AGIA, LTSS…ASFI, LLLF…IPYV, and FAWL…YLAI.

The protein resides in the cell membrane. This is an uncharacterized protein from Mycoplasma genitalium (strain ATCC 33530 / DSM 19775 / NCTC 10195 / G37) (Mycoplasmoides genitalium).